We begin with the raw amino-acid sequence, 481 residues long: MELFYVPLLSLFVLFISLSFHFLFYKSKPSSSGGFPLPPGKTGWPIIGESYEFLSTGWKGYPEKFIFDRMTKYSSNVFKTSIFGEPAAVFCGAACNKFLFSNENKLVQAWWPDSVNKVFPSSTQTSSKEEAIKMRKMLPNFFKPEALQRYIGLMDQIAANHFESGWENKNEVVVFPLAKSYTFWIACKVFVSVEEPAQVAELLEPFSAIASGIISVPIDLPGTPFNSAIKSSKIVRRKLVGIIKQRKIDLGEGKASATQDILSHMLLTSDESGKFMGEGDIADKILGLLIGGHDTASSACTFVVKFLAELPQIYEGVYQEQMEIVKSKKAGELLKWEDIQKMKYSWNVACEVLRLAPPLQGAFREALSDFTYNGFSIPKGWKLYWSANSTHINSEVFPEPLKFDPSRFDGAGPPPFSFVPFGGGPRMCPGKEYARLEILVFMHHLVKRFKWEKVIPDEKIVVNPMPIPANGLPVRLFPHKA.

The helical transmembrane segment at 4-24 threads the bilayer; it reads FYVPLLSLFVLFISLSFHFLF. Cysteine 428 is a heme binding site.

This sequence belongs to the cytochrome P450 family. Requires heme as cofactor. As to expression, mostly expressed in roots, and, to a lower extent, in stems and leaves. Accumulates only in the rhizome of plants.

The protein resides in the membrane. It carries out the reaction beta-amyrin + 3 reduced [NADPH--hemoprotein reductase] + 3 O2 = oleanolate + 3 oxidized [NADPH--hemoprotein reductase] + 4 H2O + 4 H(+). The protein operates within secondary metabolite biosynthesis; terpenoid biosynthesis. Component of the oleanane-type triterpene saponins (e.g. ginsenosides or panaxosides) biosynthetic pathway. Catalyzes the carboxylation of beta-amyrin at the C-28 position to form oleanolic acid during ginsenoside biosynthesis, a class of tetracyclic triterpenoid saponins. The polypeptide is Beta-amyrin 28-monooxygenase (Panax ginseng (Korean ginseng)).